A 279-amino-acid chain; its full sequence is NADPH-dependent 7-cyano-7-deazaguanine reductase (279 aa).

86–88 (IES) is a substrate binding site. 88 to 89 (SK) contacts NADPH. The active-site Thioimide intermediate is the C187. The Proton donor role is filled by D194. 226–227 (HE) contacts substrate. Residue 255-256 (RG) participates in NADPH binding.

It belongs to the GTP cyclohydrolase I family. QueF type 2 subfamily. Homodimer.

Its subcellular location is the cytoplasm. The enzyme catalyses 7-aminomethyl-7-carbaguanine + 2 NADP(+) = 7-cyano-7-deazaguanine + 2 NADPH + 3 H(+). Its pathway is tRNA modification; tRNA-queuosine biosynthesis. Its function is as follows. Catalyzes the NADPH-dependent reduction of 7-cyano-7-deazaguanine (preQ0) to 7-aminomethyl-7-deazaguanine (preQ1). In Actinobacillus pleuropneumoniae serotype 7 (strain AP76), this protein is NADPH-dependent 7-cyano-7-deazaguanine reductase.